Reading from the N-terminus, the 295-residue chain is 4-hydroxy-tetrahydrodipicolinate synthase (295 aa).

T47 is a pyruvate binding site. Residue Y135 is the Proton donor/acceptor of the active site. Residue K163 is the Schiff-base intermediate with substrate of the active site. I206 provides a ligand contact to pyruvate.

Belongs to the DapA family. In terms of assembly, homodimer.

It localises to the cytoplasm. It catalyses the reaction L-aspartate 4-semialdehyde + pyruvate = (2S,4S)-4-hydroxy-2,3,4,5-tetrahydrodipicolinate + H2O + H(+). Its pathway is amino-acid biosynthesis; L-lysine biosynthesis via DAP pathway; (S)-tetrahydrodipicolinate from L-aspartate: step 3/4. Its function is as follows. Catalyzes the condensation of (S)-aspartate-beta-semialdehyde [(S)-ASA] and pyruvate to 4-hydroxy-tetrahydrodipicolinate (HTPA). This chain is 4-hydroxy-tetrahydrodipicolinate synthase, found in Staphylococcus aureus (strain MSSA476).